A 60-amino-acid chain; its full sequence is Large ribosomal subunit protein bL32A (60 aa).

Basic residues predominate over residues 1-19 (MAVPKRRMSRSNTRSRRSQ). The segment at 1 to 21 (MAVPKRRMSRSNTRSRRSQWK) is disordered.

The protein belongs to the bacterial ribosomal protein bL32 family.

The sequence is that of Large ribosomal subunit protein bL32A from Nocardia farcinica (strain IFM 10152).